The following is a 247-amino-acid chain: AA9 family lytic polysaccharide monooxygenase A (247 aa).

Residues 1–19 form the signal peptide; the sequence is MVRLASLAVLGSVIATASA. Cu(2+) contacts are provided by His20 and His100. An intrachain disulfide couples Cys60 to Cys185. O2 is bound at residue His165. Tyr182 serves as a coordination point for Cu(2+). Asn193 carries N-linked (GlcNAc...) asparagine glycosylation.

Belongs to the polysaccharide monooxygenase AA9 family. Requires Cu(2+) as cofactor.

It localises to the secreted. It carries out the reaction [(1-&gt;4)-beta-D-glucosyl]n+m + reduced acceptor + O2 = 4-dehydro-beta-D-glucosyl-[(1-&gt;4)-beta-D-glucosyl]n-1 + [(1-&gt;4)-beta-D-glucosyl]m + acceptor + H2O.. Lytic polysaccharide monooxygenase (LPMO) that depolymerizes polysaccharides via the oxidation of scissile alpha- or beta-(1-4)-glycosidic bonds, yielding C4 oxidation products. Catalysis by LPMOs requires the reduction of the active-site copper from Cu(II) to Cu(I) by a reducing agent and H(2)O(2) or O(2) as a cosubstrate. Shows C4-oxidative cleavage of amorphous cellulose and soluble cello-oligosaccharides. Also active on xyloglucan, mixed-linkage beta-glucan, and glucomannan. Not active on crystalline forms of cellulose. Has higher affinity for linear substrates compared to branched substrates. Catalyzes a fast and specific peroxygenase reaction that is at least two orders of magnitude faster than the apparent monooxygenase reaction. The polypeptide is AA9 family lytic polysaccharide monooxygenase A (Schizophyllum commune (strain H4-8 / FGSC 9210) (Split gill fungus)).